A 105-amino-acid chain; its full sequence is Hydrogen cyanide synthase subunit HcnA (105 aa).

The 2Fe-2S ferredoxin-type domain maps to 16 to 97 (ADMTISLNGQ…GMQVQTLSNR (82 aa)). Residues C60, C65, C68, and C81 each coordinate [2Fe-2S] cluster.

In terms of assembly, heterotrimer of HcnA, HcnB and HcnC.

It is found in the cell membrane. The enzyme catalyses glycine + 2 A = hydrogen cyanide + 2 AH2 + CO2. In terms of biological role, a three-component membrane-bound flavoenzyme that catalyzes the formation of hydrogen cyanide, a secondary metabolite, by transfer of electrons to a cyanide-resistant branch of the aerobic respiratory chain. Contributes to suppression of black root rot of tobacco. The protein is Hydrogen cyanide synthase subunit HcnA of Pseudomonas protegens (strain DSM 19095 / LMG 27888 / CFBP 6595 / CHA0).